Consider the following 421-residue polypeptide: Imidazolonepropionase (421 aa).

Fe(3+)-binding residues include histidine 81 and histidine 83. Zn(2+) is bound by residues histidine 81 and histidine 83. Residues arginine 90, tyrosine 153, and histidine 186 each contribute to the 4-imidazolone-5-propanoate site. Tyrosine 153 contributes to the N-formimidoyl-L-glutamate binding site. Position 251 (histidine 251) interacts with Fe(3+). Histidine 251 serves as a coordination point for Zn(2+). Glutamate 254 serves as a coordination point for 4-imidazolone-5-propanoate. Fe(3+) is bound at residue aspartate 326. Position 326 (aspartate 326) interacts with Zn(2+). Positions 328 and 330 each coordinate N-formimidoyl-L-glutamate. Serine 331 contacts 4-imidazolone-5-propanoate.

This sequence belongs to the metallo-dependent hydrolases superfamily. HutI family. Zn(2+) is required as a cofactor. Requires Fe(3+) as cofactor.

It localises to the cytoplasm. It catalyses the reaction 4-imidazolone-5-propanoate + H2O = N-formimidoyl-L-glutamate. Its pathway is amino-acid degradation; L-histidine degradation into L-glutamate; N-formimidoyl-L-glutamate from L-histidine: step 3/3. In terms of biological role, catalyzes the hydrolytic cleavage of the carbon-nitrogen bond in imidazolone-5-propanoate to yield N-formimidoyl-L-glutamate. It is the third step in the universal histidine degradation pathway. This Streptococcus pyogenes serotype M3 (strain SSI-1) protein is Imidazolonepropionase.